A 334-amino-acid chain; its full sequence is Serine/Arginine-related protein 53 (334 aa).

The segment covering 1–13 has biased composition (basic and acidic residues); sequence MGRRSSDTEEESR. 3 disordered regions span residues 1–179, 198–220, and 246–290; these read MGRR…HLPP, DEALKAKERSEEEAKRRKEEDQA, and RSSK…SIPT. Basic residues predominate over residues 14 to 24; that stretch reads SKRKKKHRRRS. Basic and acidic residues predominate over residues 44-62; the sequence is PRSDSRSWSRDRQLRSHSY. Basic residues predominate over residues 78 to 118; it reads SRRKRSRSRSRGRGKPYRVQRSRSKSRTRRSRSRPRPRSHS. Basic and acidic residues-rich tracts occupy residues 132 to 166, 198 to 218, and 247 to 256; these read RSRDRDRRKVRDKEKREKEKDKGKDKEVHSIKRGD, DEALKAKERSEEEAKRRKEED, and SSKDVKKAVE. Residues 180–236 are a coiled coil; the sequence is AEQAKARLQLVLEAAAKADEALKAKERSEEEAKRRKEEDQATLVEQVKRVKEIEAIE. Over residues 265 to 278 the composition is skewed to low complexity; sequence AASGPASAAAEPPS.

In terms of assembly, interacts (via Arg/Ser-rich domain) with LUC7L3, RBM39 and RSF1. Phosphorylated.

The protein localises to the nucleus. Its subcellular location is the nucleus speckle. It localises to the cytoplasm. Plays a role in pre-mRNA splicing. Involved in both constitutive and alternative pre-mRNA splicing. May have a role in the recognition of the 3' splice site during the second step of splicing. In Mus musculus (Mouse), this protein is Serine/Arginine-related protein 53 (Rsrc1).